Consider the following 568-residue polypeptide: Proline--tRNA ligase (568 aa).

It belongs to the class-II aminoacyl-tRNA synthetase family. ProS type 1 subfamily. Homodimer.

The protein localises to the cytoplasm. The catalysed reaction is tRNA(Pro) + L-proline + ATP = L-prolyl-tRNA(Pro) + AMP + diphosphate. Catalyzes the attachment of proline to tRNA(Pro) in a two-step reaction: proline is first activated by ATP to form Pro-AMP and then transferred to the acceptor end of tRNA(Pro). As ProRS can inadvertently accommodate and process non-cognate amino acids such as alanine and cysteine, to avoid such errors it has two additional distinct editing activities against alanine. One activity is designated as 'pretransfer' editing and involves the tRNA(Pro)-independent hydrolysis of activated Ala-AMP. The other activity is designated 'posttransfer' editing and involves deacylation of mischarged Ala-tRNA(Pro). The misacylated Cys-tRNA(Pro) is not edited by ProRS. In Chlamydia pneumoniae (Chlamydophila pneumoniae), this protein is Proline--tRNA ligase.